We begin with the raw amino-acid sequence, 475 residues long: Ataxin-10 (475 aa).

Arg10 is modified (omega-N-methylarginine). 2 positions are modified to phosphoserine: Ser12 and Ser77. At Thr82 the chain carries Phosphothreonine. Residue Ser430 is modified to Phosphoserine.

It belongs to the ataxin-10 family. In terms of assembly, homooligomer. Interacts with GNB2. Interacts with IQCB1. Interacts with OGT. Post-translationally, polyubiquitinated. In terms of processing, phosphorylation at Ser-12 by AURKB promotes the association of ATXN10 with PLK1. Phosphorylation at Ser-77 and Thr-82 by PLK1 may play a role in the regulation of cytokinesis and may stimulate the proteasome-mediated degradation of ATXN10. In terms of tissue distribution, ubiquitous distribution. Markedly increased expression in testis, adrenals, and brain.

The protein localises to the cytoplasm. It is found in the perinuclear region. Its subcellular location is the midbody. It localises to the cytoskeleton. The protein resides in the cilium basal body. The protein localises to the microtubule organizing center. It is found in the centrosome. Its subcellular location is the centriole. Its function is as follows. May play a role in the regulation of cytokinesis. May play a role in signaling by stimulating protein glycosylation. Induces neuritogenesis by activating the Ras-MAP kinase pathway and is necessary for the survival of cerebellar neurons. Does not appear to play a major role in ciliogenesis. The sequence is that of Ataxin-10 (Atxn10) from Rattus norvegicus (Rat).